The primary structure comprises 230 residues: Ribonuclease HII (230 aa).

Residues 28-217 (FRIAGIDEAG…VKEHLPSQPD (190 aa)) form the RNase H type-2 domain. Aspartate 34, glutamate 35, and aspartate 126 together coordinate a divalent metal cation. The tract at residues 209–230 (KEHLPSQPDSDTAGPSTGLFSF) is disordered. Polar residues predominate over residues 215–230 (QPDSDTAGPSTGLFSF).

This sequence belongs to the RNase HII family. Mn(2+) serves as cofactor. The cofactor is Mg(2+).

Its subcellular location is the cytoplasm. The enzyme catalyses Endonucleolytic cleavage to 5'-phosphomonoester.. In terms of biological role, endonuclease that specifically degrades the RNA of RNA-DNA hybrids. This chain is Ribonuclease HII, found in Citrifermentans bemidjiense (strain ATCC BAA-1014 / DSM 16622 / JCM 12645 / Bem) (Geobacter bemidjiensis).